An 81-amino-acid chain; its full sequence is Small ribosomal subunit protein bS16 (81 aa).

This sequence belongs to the bacterial ribosomal protein bS16 family.

The protein is Small ribosomal subunit protein bS16 of Lachnospira eligens (strain ATCC 27750 / DSM 3376 / VPI C15-48 / C15-B4) (Eubacterium eligens).